Consider the following 964-residue polypeptide: Glycine dehydrogenase (decarboxylating) (964 aa).

Positions 1–11 are enriched in polar residues; the sequence is MNSTLQNQTKT. A disordered region spans residues 1 to 21; sequence MNSTLQNQTKTNLEKVGTDPL. Lysine 713 carries the N6-(pyridoxal phosphate)lysine modification.

It belongs to the GcvP family. In terms of assembly, the glycine cleavage system is composed of four proteins: P, T, L and H. Requires pyridoxal 5'-phosphate as cofactor.

The enzyme catalyses N(6)-[(R)-lipoyl]-L-lysyl-[glycine-cleavage complex H protein] + glycine + H(+) = N(6)-[(R)-S(8)-aminomethyldihydrolipoyl]-L-lysyl-[glycine-cleavage complex H protein] + CO2. In terms of biological role, the glycine cleavage system catalyzes the degradation of glycine. The P protein binds the alpha-amino group of glycine through its pyridoxal phosphate cofactor; CO(2) is released and the remaining methylamine moiety is then transferred to the lipoamide cofactor of the H protein. This Leptospira interrogans serogroup Icterohaemorrhagiae serovar copenhageni (strain Fiocruz L1-130) protein is Glycine dehydrogenase (decarboxylating).